The chain runs to 157 residues: 6,7-dimethyl-8-ribityllumazine synthase (157 aa).

5-amino-6-(D-ribitylamino)uracil contacts are provided by residues Phe22, 57–59 (AYE), and 81–83 (TVI). 86–87 (GT) is a (2S)-2-hydroxy-3-oxobutyl phosphate binding site. His89 functions as the Proton donor in the catalytic mechanism. Phe114 is a binding site for 5-amino-6-(D-ribitylamino)uracil. Arg128 contacts (2S)-2-hydroxy-3-oxobutyl phosphate.

The protein belongs to the DMRL synthase family. Forms an icosahedral capsid composed of 60 subunits, arranged as a dodecamer of pentamers.

The catalysed reaction is (2S)-2-hydroxy-3-oxobutyl phosphate + 5-amino-6-(D-ribitylamino)uracil = 6,7-dimethyl-8-(1-D-ribityl)lumazine + phosphate + 2 H2O + H(+). The protein operates within cofactor biosynthesis; riboflavin biosynthesis; riboflavin from 2-hydroxy-3-oxobutyl phosphate and 5-amino-6-(D-ribitylamino)uracil: step 1/2. Its function is as follows. Catalyzes the formation of 6,7-dimethyl-8-ribityllumazine by condensation of 5-amino-6-(D-ribitylamino)uracil with 3,4-dihydroxy-2-butanone 4-phosphate. This is the penultimate step in the biosynthesis of riboflavin. In Pasteurella multocida (strain Pm70), this protein is 6,7-dimethyl-8-ribityllumazine synthase.